The sequence spans 235 residues: Sperm annulus positionning complex subunit Chibby3 (235 aa).

Residues 1–41 are disordered; that stretch reads MADSKMKWGQAWDSSLGTATTSSSSATGSPSPFQNIRVPDT. A compositionally biased stretch (low complexity) spans 14-32; it reads SSLGTATTSSSSATGSPSP. Residues 167-181 form a leucine-zipper; mediates homodimerization region; sequence LLEENNYLKLQQELL.

The protein belongs to the chibby family. As to quaternary structure, homodimer. Interacts with CIBAR1 (via BAR-like domain); both proteins form a ninefold symmetric structure at the flagellar base; are recruited to the annulus in a mutually dependent manner and regulate annulus positionning. In terms of tissue distribution, testis-specific.

The protein localises to the cell projection. Its subcellular location is the cilium. It localises to the flagellum. Functionally, plays a key role in the correct positioning of the annulus, a septin-based ring strucure in the sperm flagellum, serving both as a physical barrier and a membrane diffusion barrier that separates the midpiece (MP) from the principal piece (PP). This positioning is essential for proper sperm motility and function. Interacts with CIBAR1 to form a complex which localizes to the curved membrane region of the flagellar pocket. By doing so, may provide stability and rigidity to the periannular membrane to prevent membrane deformation. This function is crucial for halting annulus migration at the proximal end of the fibrous sheath-containing PP. The protein is Sperm annulus positionning complex subunit Chibby3 (Cby3) of Mus musculus (Mouse).